The primary structure comprises 139 residues: Nucleoside diphosphate kinase (139 aa).

K10, F58, R86, T92, R103, and N113 together coordinate ATP. H116 serves as the catalytic Pros-phosphohistidine intermediate.

This sequence belongs to the NDK family. In terms of assembly, homotetramer. It depends on Mg(2+) as a cofactor.

Its subcellular location is the cytoplasm. The catalysed reaction is a 2'-deoxyribonucleoside 5'-diphosphate + ATP = a 2'-deoxyribonucleoside 5'-triphosphate + ADP. It catalyses the reaction a ribonucleoside 5'-diphosphate + ATP = a ribonucleoside 5'-triphosphate + ADP. Major role in the synthesis of nucleoside triphosphates other than ATP. The ATP gamma phosphate is transferred to the NDP beta phosphate via a ping-pong mechanism, using a phosphorylated active-site intermediate. The sequence is that of Nucleoside diphosphate kinase from Desulfovibrio desulfuricans (strain ATCC 27774 / DSM 6949 / MB).